A 123-amino-acid polypeptide reads, in one-letter code: Small ribosomal subunit protein uS13 (123 aa).

The interval 94-123 is disordered; that stretch reads RRGLPVRGQHTKNNARTRKGPARAIAGKKK.

It belongs to the universal ribosomal protein uS13 family. As to quaternary structure, part of the 30S ribosomal subunit. Forms a loose heterodimer with protein S19. Forms two bridges to the 50S subunit in the 70S ribosome.

Functionally, located at the top of the head of the 30S subunit, it contacts several helices of the 16S rRNA. In the 70S ribosome it contacts the 23S rRNA (bridge B1a) and protein L5 of the 50S subunit (bridge B1b), connecting the 2 subunits; these bridges are implicated in subunit movement. Contacts the tRNAs in the A and P-sites. In Oenococcus oeni (strain ATCC BAA-331 / PSU-1), this protein is Small ribosomal subunit protein uS13.